We begin with the raw amino-acid sequence, 239 residues long: Peptidyl-tRNA hydrolase (239 aa).

Tyr-14 serves as a coordination point for tRNA. The active-site Proton acceptor is the His-19. TRNA is bound by residues Phe-64, Asn-66, and Asn-112. The tract at residues Ala-188 to Arg-239 is disordered. The span at Lys-198–Arg-239 shows a compositional bias: basic and acidic residues.

Belongs to the PTH family. As to quaternary structure, monomer.

It localises to the cytoplasm. It catalyses the reaction an N-acyl-L-alpha-aminoacyl-tRNA + H2O = an N-acyl-L-amino acid + a tRNA + H(+). Its function is as follows. Hydrolyzes ribosome-free peptidyl-tRNAs (with 1 or more amino acids incorporated), which drop off the ribosome during protein synthesis, or as a result of ribosome stalling. Catalyzes the release of premature peptidyl moieties from peptidyl-tRNA molecules trapped in stalled 50S ribosomal subunits, and thus maintains levels of free tRNAs and 50S ribosomes. This chain is Peptidyl-tRNA hydrolase, found in Jannaschia sp. (strain CCS1).